We begin with the raw amino-acid sequence, 118 residues long: Large ribosomal subunit protein bL21c (118 aa).

This sequence belongs to the bacterial ribosomal protein bL21 family. In terms of assembly, part of the 50S ribosomal subunit.

It is found in the plastid. The protein resides in the chloroplast. In terms of biological role, this protein binds to 23S rRNA. The sequence is that of Large ribosomal subunit protein bL21c from Psilotum nudum (Whisk fern).